A 213-amino-acid chain; its full sequence is Glycerol-3-phosphate acyltransferase (213 aa).

A run of 6 helical transmembrane segments spans residues 3-23, 48-68, 71-91, 119-139, 144-164, and 165-185; these read IIIL…GLWI, ILGV…GTLA, LPLI…LAVI, PFFL…FSMI, VVAA…GFIL, and TSYD…IIFR.

This sequence belongs to the PlsY family. In terms of assembly, probably interacts with PlsX.

The protein localises to the cell membrane. The enzyme catalyses an acyl phosphate + sn-glycerol 3-phosphate = a 1-acyl-sn-glycero-3-phosphate + phosphate. The protein operates within lipid metabolism; phospholipid metabolism. Catalyzes the transfer of an acyl group from acyl-phosphate (acyl-PO(4)) to glycerol-3-phosphate (G3P) to form lysophosphatidic acid (LPA). This enzyme utilizes acyl-phosphate as fatty acyl donor, but not acyl-CoA or acyl-ACP. The polypeptide is Glycerol-3-phosphate acyltransferase (Lactococcus lactis subsp. cremoris (strain MG1363)).